A 395-amino-acid polypeptide reads, in one-letter code: Altered inheritance of mitochondria protein 39, mitochondrial (395 aa).

The helical transmembrane segment at 156–176 (QIWSAIFGGIFGVILGYSLIY) threads the bilayer.

It belongs to the AIM39 family.

It is found in the mitochondrion membrane. This Saccharomyces cerevisiae (strain JAY291) (Baker's yeast) protein is Altered inheritance of mitochondria protein 39, mitochondrial (AIM39).